The following is an 865-amino-acid chain: DNA topoisomerase 3-beta (865 aa).

Positions 6 to 151 (RVLMVAEKPS…KVYRARFSSV (146 aa)) constitute a Toprim domain. Residues Glu-12, Asp-116, and Asp-118 each coordinate Mg(2+). One can recognise a Topo IA-type catalytic domain in the interval 167-587 (NRDEALAVDA…HVIQQFRRKF (421 aa)). Positions 209–214 (SYGPCQ) are interaction with DNA. Tyr-331 acts as the O-(5'-phospho-DNA)-tyrosine intermediate in catalysis. A compositionally biased stretch (basic residues) spans 833 to 853 (RRGGRGRGRGRGRGRGGRRGS). A disordered region spans residues 833 to 865 (RRGGRGRGRGRGRGRGGRRGSKSVDPKMSFRDF). Basic and acidic residues predominate over residues 854-865 (KSVDPKMSFRDF).

It belongs to the type IA topoisomerase family. The cofactor is Mg(2+).

It catalyses the reaction ATP-independent breakage of single-stranded DNA, followed by passage and rejoining.. Its function is as follows. Releases the supercoiling and torsional tension of DNA introduced during the DNA replication and transcription by transiently cleaving and rejoining one strand of the DNA duplex. Introduces a single-strand break via transesterification at a target site in duplex DNA. The scissile phosphodiester is attacked by the catalytic tyrosine of the enzyme, resulting in the formation of a DNA-(5'-phosphotyrosyl)-enzyme intermediate and the expulsion of a 3'-OH DNA strand. The free DNA strand than undergoes passage around the unbroken strand thus removing DNA supercoils. Finally, in the religation step, the DNA 3'-OH attacks the covalent intermediate to expel the active-site tyrosine and restore the DNA phosphodiester backbone. The protein is DNA topoisomerase 3-beta of Arabidopsis thaliana (Mouse-ear cress).